Reading from the N-terminus, the 219-residue chain is Cytidylate kinase (219 aa).

15–23 serves as a coordination point for ATP; that stretch reads GPAASGKGT.

Belongs to the cytidylate kinase family. Type 1 subfamily.

Its subcellular location is the cytoplasm. It carries out the reaction CMP + ATP = CDP + ADP. The enzyme catalyses dCMP + ATP = dCDP + ADP. In Brucella melitensis biotype 2 (strain ATCC 23457), this protein is Cytidylate kinase.